Reading from the N-terminus, the 501-residue chain is Sarpagan bridge enzyme (501 aa).

The helical; Signal-anchor for type II membrane protein transmembrane segment at 3-23 (VMQLSFSYPALFLFVFFLFML) threads the bilayer. C441 contacts heme.

The protein belongs to the cytochrome P450 family. Heme is required as a cofactor. Highly expressed in roots. Expressed at low levels in stems.

It localises to the endoplasmic reticulum membrane. It carries out the reaction (19E)-geissoschizine + reduced [NADPH--hemoprotein reductase] + O2 = polyneuridine aldehyde + oxidized [NADPH--hemoprotein reductase] + 2 H2O + H(+). The catalysed reaction is tetrahydroalstonine + A + reduced [NADPH--hemoprotein reductase] + O2 = alstonine + AH2 + oxidized [NADPH--hemoprotein reductase] + 2 H2O + H(+). It catalyses the reaction ajmalicine + A + reduced [NADPH--hemoprotein reductase] + O2 = serpentine + AH2 + oxidized [NADPH--hemoprotein reductase] + 2 H2O + H(+). The protein operates within alkaloid biosynthesis; ajmaline biosynthesis. Its function is as follows. Monooxygenase involved in the biosynthesis of ajmaline-type monoterpenoid indole alkaloids (MIAs) natural products, important plant-derived pharmaceuticals used in the therapy of heart disorders. Converts by cyclization the strictosidine-derived geissoschizine to the sarpagan alkaloid polyneuridine aldehyde, precursor of vomilenine, an intermediate chemical in the biosynthesis of ajmaline. Converts by aromatization the tetrahydro-beta-carboline alkaloids tetrahydroalstonine and ajmalicine to the corresponding beta-carboline alkaloids alstonine and serpentine, respectively. This chain is Sarpagan bridge enzyme, found in Gelsemium sempervirens (Carolina jasmine).